The primary structure comprises 75 residues: Small ribosomal subunit protein bS18 (75 aa).

Belongs to the bacterial ribosomal protein bS18 family. As to quaternary structure, part of the 30S ribosomal subunit. Forms a tight heterodimer with protein bS6.

Binds as a heterodimer with protein bS6 to the central domain of the 16S rRNA, where it helps stabilize the platform of the 30S subunit. The protein is Small ribosomal subunit protein bS18 of Psychrobacter sp. (strain PRwf-1).